We begin with the raw amino-acid sequence, 296 residues long: GTPase Era (296 aa).

The region spanning 3 to 170 (KSGFITIVGR…LELMVKYLPE (168 aa)) is the Era-type G domain. Residues 11–18 (GRPNVGKS) are G1. GTP is bound at residue 11-18 (GRPNVGKS). Residues 37-41 (QTTRN) are G2. The interval 58 to 61 (DTPG) is G3. Residues 58 to 62 (DTPGI) and 120 to 123 (NKVD) each bind GTP. Residues 120 to 123 (NKVD) are G4. The segment at 149-151 (ISA) is G5. Positions 201 to 278 (LSQEVPHGIA…NIKIWVKVRK (78 aa)) constitute a KH type-2 domain.

Belongs to the TRAFAC class TrmE-Era-EngA-EngB-Septin-like GTPase superfamily. Era GTPase family. Monomer.

The protein resides in the cytoplasm. It is found in the cell membrane. An essential GTPase that binds both GDP and GTP, with rapid nucleotide exchange. Plays a role in 16S rRNA processing and 30S ribosomal subunit biogenesis and possibly also in cell cycle regulation and energy metabolism. This chain is GTPase Era, found in Clostridium perfringens (strain 13 / Type A).